The chain runs to 335 residues: tRNA N6-adenosine threonylcarbamoyltransferase (335 aa).

A divalent metal cation contacts are provided by His-109, His-113, and Tyr-130. Substrate contacts are provided by residues 130 to 134 (YVSGG), Asp-162, Gly-177, Glu-181, and Asn-266. Asp-294 contacts a divalent metal cation.

Belongs to the KAE1 / TsaD family. As to quaternary structure, component of the EKC/KEOPS complex composed of at least GON7, TP53RK, TPRKB, OSGEP and LAGE3; the whole complex dimerizes. A divalent metal cation serves as cofactor.

It localises to the cytoplasm. Its subcellular location is the nucleus. The catalysed reaction is L-threonylcarbamoyladenylate + adenosine(37) in tRNA = N(6)-L-threonylcarbamoyladenosine(37) in tRNA + AMP + H(+). Component of the EKC/KEOPS complex that is required for the formation of a threonylcarbamoyl group on adenosine at position 37 (t(6)A37) in tRNAs that read codons beginning with adenine. The complex is probably involved in the transfer of the threonylcarbamoyl moiety of threonylcarbamoyl-AMP (TC-AMP) to the N6 group of A37. OSGEP likely plays a direct catalytic role in this reaction, but requires other protein(s) of the complex to fulfill this activity. In Rattus norvegicus (Rat), this protein is tRNA N6-adenosine threonylcarbamoyltransferase (Osgep).